We begin with the raw amino-acid sequence, 101 residues long: Feather keratin Cos2-2 (101 aa).

Serine 2 carries the N-acetylserine modification.

Belongs to the avian keratin family. In terms of assembly, the avian keratins (F-ker, S-ker, C-ker and B-ker) are a complex mixture of very similar polypeptides.

This chain is Feather keratin Cos2-2, found in Columba livia (Rock dove).